We begin with the raw amino-acid sequence, 48 residues long: Cytochrome b559 subunit beta (48 aa).

Residues 23-39 form a helical membrane-spanning segment; that stretch reads WLAVHALAIPSVFFLGA. A heme-binding site is contributed by histidine 27.

Belongs to the PsbE/PsbF family. Heterodimer of an alpha subunit and a beta subunit. PSII is composed of 1 copy each of membrane proteins PsbA, PsbB, PsbC, PsbD, PsbE, PsbF, PsbH, PsbI, PsbJ, PsbK, PsbL, PsbM, PsbT, PsbX, PsbY, Psb30/Ycf12, peripheral proteins PsbO, CyanoQ (PsbQ), PsbU, PsbV and a large number of cofactors. It forms dimeric complexes. Heme b serves as cofactor.

Its subcellular location is the cellular thylakoid membrane. This b-type cytochrome is tightly associated with the reaction center of photosystem II (PSII). PSII is a light-driven water:plastoquinone oxidoreductase that uses light energy to abstract electrons from H(2)O, generating O(2) and a proton gradient subsequently used for ATP formation. It consists of a core antenna complex that captures photons, and an electron transfer chain that converts photonic excitation into a charge separation. The protein is Cytochrome b559 subunit beta of Prochlorococcus marinus (strain MIT 9515).